The following is a 172-amino-acid chain: Transcription factor E (172 aa).

The region spanning 8–90 (DDPVVQKYLH…LWTFQYENVP (83 aa)) is the HTH TFE/IIEalpha-type domain.

This sequence belongs to the TFE family. In terms of assembly, monomer. Interaction with RNA polymerase subunits RpoF and RpoE is necessary for Tfe stimulatory transcription activity. Able to interact with Tbp and RNA polymerase in the absence of DNA promoter. Interacts both with the preinitiation and elongation complexes.

In terms of biological role, transcription factor that plays a role in the activation of archaeal genes transcribed by RNA polymerase. Facilitates transcription initiation by enhancing TATA-box recognition by TATA-box-binding protein (Tbp), and transcription factor B (Tfb) and RNA polymerase recruitment. Not absolutely required for transcription in vitro, but particularly important in cases where Tbp or Tfb function is not optimal. It dynamically alters the nucleic acid-binding properties of RNA polymerases by stabilizing the initiation complex and destabilizing elongation complexes. Seems to translocate with the RNA polymerase following initiation and acts by binding to the non template strand of the transcription bubble in elongation complexes. This is Transcription factor E from Halobacterium salinarum (strain ATCC 700922 / JCM 11081 / NRC-1) (Halobacterium halobium).